A 207-amino-acid chain; its full sequence is MPKVALYNQNGQTVGEIELNDAVFGIEPNKHVLFEAVIMQRASMRQGTHKTKNRAEVSGGGRKPWRQKGTGRARQGSIRAPQWRGGGTVFGPVPRSYSYKLPKKVRRLAIKSALSSKVLENDIVVLDQLSLEAPKTKEMVKILNNLSVDRKALIVTDELNENVYLSARNIPGVKVVAANGINVLDVLNHDKLVITKAAVEKVEEVLA.

The disordered stretch occupies residues 44–78 (MRQGTHKTKNRAEVSGGGRKPWRQKGTGRARQGSI).

It belongs to the universal ribosomal protein uL4 family. Part of the 50S ribosomal subunit.

Functionally, one of the primary rRNA binding proteins, this protein initially binds near the 5'-end of the 23S rRNA. It is important during the early stages of 50S assembly. It makes multiple contacts with different domains of the 23S rRNA in the assembled 50S subunit and ribosome. Forms part of the polypeptide exit tunnel. The sequence is that of Large ribosomal subunit protein uL4 from Geobacillus kaustophilus (strain HTA426).